Consider the following 315-residue polypeptide: 4-hydroxy-3-methylbut-2-enyl diphosphate reductase (315 aa).

Cys-12 is a [4Fe-4S] cluster binding site. The (2E)-4-hydroxy-3-methylbut-2-enyl diphosphate site is built by His-41 and His-74. Residues His-41 and His-74 each contribute to the dimethylallyl diphosphate site. Positions 41 and 74 each coordinate isopentenyl diphosphate. Residue Cys-96 coordinates [4Fe-4S] cluster. His-124 contributes to the (2E)-4-hydroxy-3-methylbut-2-enyl diphosphate binding site. Residue His-124 participates in dimethylallyl diphosphate binding. Position 124 (His-124) interacts with isopentenyl diphosphate. The Proton donor role is filled by Glu-126. Residue Thr-168 participates in (2E)-4-hydroxy-3-methylbut-2-enyl diphosphate binding. A [4Fe-4S] cluster-binding site is contributed by Cys-198. Ser-226, Ser-227, Asn-228, and Ser-270 together coordinate (2E)-4-hydroxy-3-methylbut-2-enyl diphosphate. Residues Ser-226, Ser-227, Asn-228, and Ser-270 each contribute to the dimethylallyl diphosphate site. Isopentenyl diphosphate-binding residues include Ser-226, Ser-227, Asn-228, and Ser-270.

Belongs to the IspH family. The cofactor is [4Fe-4S] cluster.

It catalyses the reaction isopentenyl diphosphate + 2 oxidized [2Fe-2S]-[ferredoxin] + H2O = (2E)-4-hydroxy-3-methylbut-2-enyl diphosphate + 2 reduced [2Fe-2S]-[ferredoxin] + 2 H(+). The enzyme catalyses dimethylallyl diphosphate + 2 oxidized [2Fe-2S]-[ferredoxin] + H2O = (2E)-4-hydroxy-3-methylbut-2-enyl diphosphate + 2 reduced [2Fe-2S]-[ferredoxin] + 2 H(+). Its pathway is isoprenoid biosynthesis; dimethylallyl diphosphate biosynthesis; dimethylallyl diphosphate from (2E)-4-hydroxy-3-methylbutenyl diphosphate: step 1/1. The protein operates within isoprenoid biosynthesis; isopentenyl diphosphate biosynthesis via DXP pathway; isopentenyl diphosphate from 1-deoxy-D-xylulose 5-phosphate: step 6/6. Its function is as follows. Catalyzes the conversion of 1-hydroxy-2-methyl-2-(E)-butenyl 4-diphosphate (HMBPP) into a mixture of isopentenyl diphosphate (IPP) and dimethylallyl diphosphate (DMAPP). Acts in the terminal step of the DOXP/MEP pathway for isoprenoid precursor biosynthesis. This is 4-hydroxy-3-methylbut-2-enyl diphosphate reductase from Pseudomonas syringae pv. tomato (strain ATCC BAA-871 / DC3000).